Consider the following 241-residue polypeptide: tRNA (guanine-N(7)-)-methyltransferase (241 aa).

E71, E96, D123, and D146 together coordinate S-adenosyl-L-methionine. D146 is an active-site residue. Substrate is bound by residues K150, D182, and 219–222 (TKFE).

Belongs to the class I-like SAM-binding methyltransferase superfamily. TrmB family.

It carries out the reaction guanosine(46) in tRNA + S-adenosyl-L-methionine = N(7)-methylguanosine(46) in tRNA + S-adenosyl-L-homocysteine. It functions in the pathway tRNA modification; N(7)-methylguanine-tRNA biosynthesis. Functionally, catalyzes the formation of N(7)-methylguanine at position 46 (m7G46) in tRNA. In Pseudoalteromonas translucida (strain TAC 125), this protein is tRNA (guanine-N(7)-)-methyltransferase.